A 365-amino-acid chain; its full sequence is MSKPPILTLADITKRFDTQEVLSGFNLSIEDGEFFTILGPSGCGKTTVLRLIAGFEGADEGRIMLNGQDVSKLSAEKRPVNTVFQSYALFPHMTVFDNVAFGLKMAKVSKPEIAERVKEALATVRLSDFATRKPHQLSGGQKQRVAIARAVVNRPKVLLLDESLSALDYKLRQQMQMELKQLQRKLGITFIYVTHDQEEALSMSDRVLVMHNGQAQQVGTPREIYECPNNLFVASFIGEINVFNAEIVESLSDYRYLAAMDGFKREIHADRRFEAGDKVHVLLRPEDLRIEYLEDAPDRPGFSGQVLERNYTGQTLDSQIQLQSGQTIMASEFFDEDDPDFDYSINQKVWVDWVHGWEHVIKAES.

The ABC transporter domain maps to 7-237 (LTLADITKRF…PNNLFVASFI (231 aa)). An ATP-binding site is contributed by 39 to 46 (GPSGCGKT).

Belongs to the ABC transporter superfamily. Spermidine/putrescine importer (TC 3.A.1.11.1) family. The complex is composed of two ATP-binding proteins (PotA), two transmembrane proteins (PotB and PotC) and a solute-binding protein (PotD).

Its subcellular location is the cell inner membrane. It carries out the reaction ATP + H2O + polyamine-[polyamine-binding protein]Side 1 = ADP + phosphate + polyamineSide 2 + [polyamine-binding protein]Side 1.. In terms of biological role, part of the ABC transporter complex PotABCD involved in spermidine/putrescine import. Responsible for energy coupling to the transport system. The polypeptide is Spermidine/putrescine import ATP-binding protein PotA (Hahella chejuensis (strain KCTC 2396)).